A 466-amino-acid polypeptide reads, in one-letter code: Oryzain beta chain (466 aa).

Residues 1-21 form the signal peptide; it reads MAARAAAAAFLLLLIVGAATA. The propeptide at 22–140 is activation peptide; the sequence is APDMSIISYN…ERYRHDGVEE (119 aa). Disulfide bonds link Cys162-Cys205, Cys196-Cys238, and Cys296-Cys347. Residue Cys165 is part of the active site. Active-site residues include His302 and Asn322. The N-linked (GlcNAc...) asparagine glycan is linked to Asn341. Positions 358-380 are disordered; it reads KSGANPPKPSPTPPTPPTPPPPS. Residues 362-466 constitute a propeptide, removed in mature form; that stretch reads NPPKPSPTPP…KRTLAKLNTA (105 aa). Residues 363–380 show a composition bias toward pro residues; the sequence is PPKPSPTPPTPPTPPPPS. 2 cysteine pairs are disulfide-bonded: Cys386/Cys398 and Cys392/Cys413. N-linked (GlcNAc...) asparagine glycosylation is present at Asn389.

The protein belongs to the peptidase C1 family. Expressed only in seeds.

Its function is as follows. Probable thiol protease. The chain is Oryzain beta chain from Oryza sativa subsp. japonica (Rice).